Here is a 522-residue protein sequence, read N- to C-terminus: MEFPDHSRHLLQCLSEQRHQGFLCDCTVLVGDAQFRAHRAVLASCSMYFHLFYKDQLDKRDIVHLNSDIVTAPAFALLLEFMYEGKLQFKDLPIEDVLAAASYLHMYDIVKVCKKKLKEKATTEADSTKKEEDASSCSDKVESLSDGSSHMAGDLPSDEDEGEDEKLNILPSKRDLAAEPGNMWMRLPSDSAGIPQAGGEAEPHATAAGKTVASPCSSTESLSQRSVTSVRDSADVDCVLDLSVKSSLSGVENLNSSYFSSQDVLRSNLVQVKVEKEASCDESDVGTNDYDMEHSTVKESVSTNNRVQYEPAHLAPLREDSVLRELEREDKASDDEMMTPESERVQVEGGMESSLLPYVSNILSPAGQIFMCPLCNKVFPSPHILQIHLSTHFREQDGLRSKPAADVNVPTCSLCGKTFSCMYTLKRHERTHSGEKPYTCTQCGKSFQYSHNLSRHAVVHTREKPHACKWCERRFTQSGDLYRHIRKFHCELVNSLSVKSEALSLPAVRDWTLEDSSQELWK.

One can recognise a BTB domain in the interval 24–91 (CDCTVLVGDA…MYEGKLQFKD (68 aa)). The span at 121–143 (ATTEADSTKKEEDASSCSDKVES) shows a compositional bias: basic and acidic residues. The disordered stretch occupies residues 121 to 165 (ATTEADSTKKEEDASSCSDKVESLSDGSSHMAGDLPSDEDEGEDE). S157 is subject to Phosphoserine. K273 is covalently cross-linked (Glycyl lysine isopeptide (Lys-Gly) (interchain with G-Cter in SUMO2)). The interval 310 to 427 (EPAHLAPLRE…TFSCMYTLKR (118 aa)) is interaction with DNMT3A. 4 C2H2-type zinc fingers span residues 370 to 392 (FMCPLCNKVFPSPHILQIHLSTH), 410 to 432 (PTCSLCGKTFSCMYTLKRHERTH), 438 to 460 (YTCTQCGKSFQYSHNLSRHAVVH), and 466 to 489 (HACKWCERRFTQSGDLYRHIRKFH). Phosphoserine is present on residues S516 and S517.

Belongs to the krueppel C2H2-type zinc-finger protein family. ZBTB18 subfamily. In terms of assembly, interacts with DNMT3A.

The protein localises to the nucleus. Its function is as follows. Transcriptional repressor that plays a role in various developmental processes such as myogenesis and brain development. Specifically binds the consensus DNA sequence 5'-[AC]ACATCTG[GT][AC]-3' which contains the E box core, and acts by recruiting chromatin remodeling multiprotein complexes. Plays a key role in myogenesis by directly repressing the expression of ID2 and ID3, 2 inhibitors of skeletal myogenesis. Also involved in controlling cell division of progenitor cells and regulating the survival of postmitotic cortical neurons. May also play a role in the organization of chromosomes in the nucleus. The protein is Zinc finger and BTB domain-containing protein 18 (ZBTB18) of Bos taurus (Bovine).